We begin with the raw amino-acid sequence, 183 residues long: Peptide deformylase (183 aa).

The Fe cation site is built by cysteine 111 and histidine 154. Glutamate 155 is a catalytic residue. Histidine 158 is a binding site for Fe cation.

Belongs to the polypeptide deformylase family. Fe(2+) serves as cofactor.

It catalyses the reaction N-terminal N-formyl-L-methionyl-[peptide] + H2O = N-terminal L-methionyl-[peptide] + formate. Functionally, removes the formyl group from the N-terminal Met of newly synthesized proteins. Requires at least a dipeptide for an efficient rate of reaction. N-terminal L-methionine is a prerequisite for activity but the enzyme has broad specificity at other positions. The sequence is that of Peptide deformylase from Staphylococcus aureus (strain COL).